The chain runs to 229 residues: Potassium/proton antiporter CemA (229 aa).

Transmembrane regions (helical) follow at residues 6–26 (AFIPFLYFISIVFFPWWISLC), 107–127 (IFHFSTNLISFVILSSYSFWG), 152–172 (FLILLLTDLCIGFHSPHGWEL), and 189–209 (ILSGLVSTFPVILDTIFKYWI).

The protein belongs to the CemA family.

The protein localises to the plastid. Its subcellular location is the chloroplast inner membrane. It catalyses the reaction K(+)(in) + H(+)(out) = K(+)(out) + H(+)(in). Contributes to K(+)/H(+) antiport activity by supporting proton efflux to control proton extrusion and homeostasis in chloroplasts in a light-dependent manner to modulate photosynthesis. Prevents excessive induction of non-photochemical quenching (NPQ) under continuous-light conditions. Indirectly promotes efficient inorganic carbon uptake into chloroplasts. The chain is Potassium/proton antiporter CemA from Aethionema grandiflorum (Persian stone-cress).